We begin with the raw amino-acid sequence, 348 residues long: UDP-3-O-acylglucosamine N-acyltransferase (348 aa).

The active-site Proton acceptor is the His241.

This sequence belongs to the transferase hexapeptide repeat family. LpxD subfamily. Homotrimer.

It catalyses the reaction a UDP-3-O-[(3R)-3-hydroxyacyl]-alpha-D-glucosamine + a (3R)-hydroxyacyl-[ACP] = a UDP-2-N,3-O-bis[(3R)-3-hydroxyacyl]-alpha-D-glucosamine + holo-[ACP] + H(+). The protein operates within bacterial outer membrane biogenesis; LPS lipid A biosynthesis. In terms of biological role, catalyzes the N-acylation of UDP-3-O-acylglucosamine using 3-hydroxyacyl-ACP as the acyl donor. Is involved in the biosynthesis of lipid A, a phosphorylated glycolipid that anchors the lipopolysaccharide to the outer membrane of the cell. The chain is UDP-3-O-acylglucosamine N-acyltransferase from Neisseria meningitidis serogroup C / serotype 2a (strain ATCC 700532 / DSM 15464 / FAM18).